A 203-amino-acid polypeptide reads, in one-letter code: uncharacterized protein (203 aa).

This is an uncharacterized protein from Caldicellulosiruptor sp. (strain Rt8B.4).